Consider the following 277-residue polypeptide: Thiazole synthase (277 aa).

The active-site Schiff-base intermediate with DXP is lysine 119. 1-deoxy-D-xylulose 5-phosphate is bound by residues glycine 180, alanine 206 to glycine 207, and asparagine 228 to threonine 229.

The protein belongs to the ThiG family. Homotetramer. Forms heterodimers with either ThiH or ThiS.

It localises to the plastid. It is found in the chloroplast. The enzyme catalyses [ThiS sulfur-carrier protein]-C-terminal-Gly-aminoethanethioate + 2-iminoacetate + 1-deoxy-D-xylulose 5-phosphate = [ThiS sulfur-carrier protein]-C-terminal Gly-Gly + 2-[(2R,5Z)-2-carboxy-4-methylthiazol-5(2H)-ylidene]ethyl phosphate + 2 H2O + H(+). Its pathway is cofactor biosynthesis; thiamine diphosphate biosynthesis. In terms of biological role, catalyzes the rearrangement of 1-deoxy-D-xylulose 5-phosphate (DXP) to produce the thiazole phosphate moiety of thiamine. Sulfur is provided by the thiocarboxylate moiety of the carrier protein ThiS. In vitro, sulfur can be provided by H(2)S. The protein is Thiazole synthase of Pyropia yezoensis (Susabi-nori).